Here is a 318-residue protein sequence, read N- to C-terminus: Receptor homology region, transmembrane domain- and RING domain-containing protein 6 (318 aa).

A signal peptide spans 1–20 (MNGSWITILSLLVISQLASS). Residues 22–162 (VTLIGKNTFL…LIPGFGISSW (141 aa)) lie on the Lumenal side of the membrane. A disulfide bond links cysteine 62 and cysteine 87. A PA domain is found at 70–143 (EKGSKFRPSY…RTSGEVLKEY (74 aa)). N-linked (GlcNAc...) asparagine glycosylation is present at asparagine 121. A helical transmembrane segment spans residues 163–183 (SIMAITFVSLLVISAVLASYF). Over 184-318 (SVRRHRIRQH…DLPIVVRVYL (135 aa)) the chain is Cytoplasmic. The RING-type; atypical zinc finger occupies 233-275 (CAICIDDYRVGEILRILPCKHKYHAVCIDSWLGRCRSFCPVCK).

The protein resides in the prevacuolar compartment membrane. The protein localises to the protein storage vacuole membrane. In terms of biological role, involved in the trafficking of vacuolar proteins. May function as a sorting receptor for protein trafficking to the protein storage vacuole (PSV). In Arabidopsis thaliana (Mouse-ear cress), this protein is Receptor homology region, transmembrane domain- and RING domain-containing protein 6 (RMR6).